We begin with the raw amino-acid sequence, 280 residues long: Undecaprenyl-diphosphatase (280 aa).

Transmembrane regions (helical) follow at residues 1-21, 40-60, 89-109, 116-136, 146-166, 191-211, 227-247, and 260-280; these read MEWIQAAILGIVQGLTEFLPI, GAAFTAVSQLGTEAAVIVFFW, WLVVAGSIPIIVVGLFFQNAI, LWIVATTLIVFGVILAVADAV, LTVKHGILYGLAQCLALIPGV, FLLAIPAVLGSGFYELFKIVA, LATVIAFVVGYLIIGWFLKFI, and IALGLVVFVLLGFGVIPATLS.

The protein belongs to the UppP family.

The protein resides in the cell membrane. The enzyme catalyses di-trans,octa-cis-undecaprenyl diphosphate + H2O = di-trans,octa-cis-undecaprenyl phosphate + phosphate + H(+). Functionally, catalyzes the dephosphorylation of undecaprenyl diphosphate (UPP). Confers resistance to bacitracin. The protein is Undecaprenyl-diphosphatase of Renibacterium salmoninarum (strain ATCC 33209 / DSM 20767 / JCM 11484 / NBRC 15589 / NCIMB 2235).